We begin with the raw amino-acid sequence, 486 residues long: Na(+)/H(+) antiporter NhaA 2 (486 aa).

11 consecutive transmembrane segments (helical) span residues 58–78 (GGLL…TAPG), 102–122 (LTDW…GLEL), 138–158 (ALPV…CLAL), 168–188 (AWAI…SLAG), 198–218 (VLLG…ALGL), 220–240 (HGIN…TALA), 260–280 (ISLH…GLLV), 300–320 (LGPI…TGVS), 338–358 (VAVG…WLAV), 374–394 (LVPL…ITRL), and 404–424 (GAST…LTAL). The interval 432–486 (GAPATRGSSRPATQVGGVAGPIPQTRRESDGGPTGGQEPPPARVRRAPPASPHPR) is disordered.

The protein belongs to the NhaA Na(+)/H(+) (TC 2.A.33) antiporter family.

The protein localises to the cell membrane. It catalyses the reaction Na(+)(in) + 2 H(+)(out) = Na(+)(out) + 2 H(+)(in). In terms of biological role, na(+)/H(+) antiporter that extrudes sodium in exchange for external protons. The polypeptide is Na(+)/H(+) antiporter NhaA 2 (Frankia alni (strain DSM 45986 / CECT 9034 / ACN14a)).